We begin with the raw amino-acid sequence, 478 residues long: Catalase (478 aa).

Residues 1 to 23 (MTNQLTTNEGQPWADNQHSQTAG) form a disordered region. Active-site residues include H53 and N126. Y336 serves as a coordination point for heme.

The protein belongs to the catalase family. Heme serves as cofactor.

Its subcellular location is the cytoplasm. The catalysed reaction is 2 H2O2 = O2 + 2 H2O. Its function is as follows. Decomposes hydrogen peroxide into water and oxygen; serves to protect cells from the toxic effects of hydrogen peroxide. In Latilactobacillus sakei (Lactobacillus sakei), this protein is Catalase (katA).